The primary structure comprises 462 residues: Zinc finger CCCH domain-containing protein 8 (462 aa).

C3H1-type zinc fingers lie at residues 105-133, 156-184, 209-237, 288-316, 367-395, and 422-450; these read RPGE…HPQW, QEGE…HPKE, RPSE…HPKD, RPGE…HPDR, RPGA…HPID, and REDA…HPPP.

The protein is Zinc finger CCCH domain-containing protein 8 of Oryza sativa subsp. japonica (Rice).